Consider the following 282-residue polypeptide: Bifunctional protein FolD (282 aa).

NADP(+) is bound by residues 165 to 167 and I231; that span reads GAS.

This sequence belongs to the tetrahydrofolate dehydrogenase/cyclohydrolase family. Homodimer.

The enzyme catalyses (6R)-5,10-methylene-5,6,7,8-tetrahydrofolate + NADP(+) = (6R)-5,10-methenyltetrahydrofolate + NADPH. It catalyses the reaction (6R)-5,10-methenyltetrahydrofolate + H2O = (6R)-10-formyltetrahydrofolate + H(+). The protein operates within one-carbon metabolism; tetrahydrofolate interconversion. In terms of biological role, catalyzes the oxidation of 5,10-methylenetetrahydrofolate to 5,10-methenyltetrahydrofolate and then the hydrolysis of 5,10-methenyltetrahydrofolate to 10-formyltetrahydrofolate. The protein is Bifunctional protein FolD of Francisella philomiragia subsp. philomiragia (strain ATCC 25017 / CCUG 19701 / FSC 153 / O#319-036).